Here is a 141-residue protein sequence, read N- to C-terminus: Anthrone oxygenase ptaC (141 aa).

Residues 1 to 19 (MMGLPLMAVPMLLDTGADP) form the signal peptide. Transmembrane regions (helical) follow at residues 33-53 (GVRTMPPLAITTFILYVWTII) and 64-84 (ILAVAAVVTMGMIPFTWYVLA).

It belongs to the anthrone oxygenase family.

The protein localises to the membrane. The protein operates within secondary metabolite biosynthesis. Functionally, anthrone oxygenase; part of the gene cluster that mediates the biosynthesis of pestheic acid, a diphenyl ether which is a biosynthetic precursor of the unique chloropupukeananes. The biosynthesis initiates from condensation of acetate and malonate units catalyzed by the non-reducing PKS ptaA. As the ptaA protein is TE/CLC domain-deficient, hydrolysis and Claisen cyclization of the polyketide could be catalyzed by ptaB containing a beta-lactamase domain. The ptaB protein might hydrolyze the thioester bond between the ACP of ptaA and the intermediate to release atrochrysone carboxylic acid, which is spontaneously dehydrated to form endocrocin anthrone. Endocrocin anthrone is then converted to endocrocin, catalyzed by the anthrone oxygenase ptaC. Spontaneous decarboxylation of endocrocin occurs to generate emodin. An O-methyltransferase (ptaH or ptaI) could methylate emodin to form physcion. PtaJ could then catalyze the oxidative cleavage of physcion, and rotation of the intermediate could then afford desmethylisosulochrin. PtaF, a putative NADH-dependent oxidoreductase, might also participate in the oxidative cleavage step. Desmethylisosulochrin is then transformed by another O-methyltransferase (ptaH or ptaI) to form isosulochrin. Chlorination of isosulochrin by ptaM in the cyclohexadienone B ring then produces chloroisosulochrin. PtaE is responsible for the oxidative coupling reactions of both benzophenones isosulochrin and chloroisosulochrin to RES-1214-1 and pestheic acid respectively, regardless of chlorination. The polypeptide is Anthrone oxygenase ptaC (Pestalotiopsis fici (strain W106-1 / CGMCC3.15140)).